Here is a 611-residue protein sequence, read N- to C-terminus: Vitamin B12 transporter BtuB (611 aa).

The signal sequence occupies residues 1–22; sequence MQKSALAIALASLLTPISYLHA. Residues 29-36 carry the TonB box motif; sequence ETVVVTAN. One can recognise a TBDR plug domain in the interval 41 to 154; it reads KASSTLADVE…IGGVINIITK (114 aa). Positions 159-611 constitute a TBDR beta-barrel domain; that stretch reads QQGTTVSAGL…AYYLNIGYQF (453 aa). The short motif at 594–611 is the TonB C-terminal box element; the sequence is NGYPAAERAYYLNIGYQF.

The protein belongs to the TonB-dependent receptor family. BtuB (TC 1.B.14.3.1) subfamily.

It is found in the cell outer membrane. Involved in the active translocation of vitamin B12 (cyanocobalamin) across the outer membrane to the periplasmic space. It derives its energy for transport by interacting with the trans-periplasmic membrane protein TonB. This Vibrio cholerae serotype O1 (strain ATCC 39541 / Classical Ogawa 395 / O395) protein is Vitamin B12 transporter BtuB.